Consider the following 250-residue polypeptide: 5-oxoprolinase subunit A (250 aa).

This sequence belongs to the LamB/PxpA family. Forms a complex composed of PxpA, PxpB and PxpC.

The catalysed reaction is 5-oxo-L-proline + ATP + 2 H2O = L-glutamate + ADP + phosphate + H(+). Its function is as follows. Catalyzes the cleavage of 5-oxoproline to form L-glutamate coupled to the hydrolysis of ATP to ADP and inorganic phosphate. The chain is 5-oxoprolinase subunit A from Chromohalobacter salexigens (strain ATCC BAA-138 / DSM 3043 / CIP 106854 / NCIMB 13768 / 1H11).